A 210-amino-acid chain; its full sequence is MNGLKTPPEIGIQLPEAKVAAETGTMSGPLVPPRSDRSVRRGTDVAHVVLRFVCLLTSVIALSLMATAKEAASISIYGFLLPVSSKWSFSDSFEYLVGVSAAVAAHALLQLIISVSRLLRKSPVIPSRNHAWLIFAGDQAFAYAMLSAGSAASGVTNLNRTGIRHSPLPNFCKPLRSFCDHVAASIAFTFFSCFLLATSAILDVIWLSKY.

Residues 1 to 44 (MNGLKTPPEIGIQLPEAKVAAETGTMSGPLVPPRSDRSVRRGTD) lie on the Cytoplasmic side of the membrane. The chain crosses the membrane as a helical span at residues 45 to 65 (VAHVVLRFVCLLTSVIALSLM). The Extracellular segment spans residues 66–94 (ATAKEAASISIYGFLLPVSSKWSFSDSFE). Residues 95-115 (YLVGVSAAVAAHALLQLIISV) traverse the membrane as a helical segment. Residues 116–130 (SRLLRKSPVIPSRNH) are Cytoplasmic-facing. The chain crosses the membrane as a helical span at residues 131–151 (AWLIFAGDQAFAYAMLSAGSA). At 152-185 (ASGVTNLNRTGIRHSPLPNFCKPLRSFCDHVAAS) the chain is on the extracellular side. N159 is a glycosylation site (N-linked (GlcNAc...) asparagine). The chain crosses the membrane as a helical span at residues 186–206 (IAFTFFSCFLLATSAILDVIW). Residues 207–210 (LSKY) are Cytoplasmic-facing.

It belongs to the Casparian strip membrane proteins (CASP) family. In terms of assembly, homodimer and heterodimers.

The protein localises to the cell membrane. The sequence is that of CASP-like protein 3A1 from Vitis vinifera (Grape).